A 394-amino-acid polypeptide reads, in one-letter code: Outer membrane protein S1 (394 aa).

A signal peptide spans M1–A21. The tract at residues S222–R242 is disordered.

It belongs to the Gram-negative porin family. Homotrimer.

The protein localises to the cell outer membrane. Forms pores that allow passive diffusion of small molecules across the outer membrane. The sequence is that of Outer membrane protein S1 (ompS1) from Salmonella typhi.